We begin with the raw amino-acid sequence, 269 residues long: Hydroxypyruvate/pyruvate aldolase (269 aa).

Histidine 47 functions as the Proton acceptor in the catalytic mechanism. Residues glutamate 151 and aspartate 177 each coordinate a divalent metal cation.

It belongs to the HpcH/HpaI aldolase family. Requires a divalent metal cation as cofactor.

It carries out the reaction D-glyceraldehyde + 3-hydroxypyruvate = 2-dehydro-D-gluconate. The catalysed reaction is D-glyceraldehyde + 3-hydroxypyruvate = (3R,4S,5R)-3,4,5,6-tetrahydroxy-2-oxohexanoate. The enzyme catalyses D-glyceraldehyde + 3-hydroxypyruvate = 2-dehydro-D-galactonate. It catalyses the reaction D-glyceraldehyde + pyruvate = 2-dehydro-3-deoxy-L-galactonate. It carries out the reaction 2-dehydro-3-deoxy-D-gluconate = D-glyceraldehyde + pyruvate. In terms of biological role, aldolase which can catalyze in vitro the aldolisation reaction between hydroxypyruvate (HPA) or pyruvate (PA) and D-glyceraldehyde (D-GA). The condensation of hydroxypyruvate and D-glyceraldehyde produces 2-dehydro-D-gluconate as the major product, (3R,4S,5R)-3,4,5,6-tetrahydroxy-2-oxohexanoate and 2-dehydro-D-galactonate. The condensation of pyruvate and D-glyceraldehyde produces 2-dehydro-3-deoxy-L-galactonate as the major product and 2-dehydro-3-deoxy-D-gluconate. The protein is Hydroxypyruvate/pyruvate aldolase of Cupriavidus necator (strain ATCC 17699 / DSM 428 / KCTC 22496 / NCIMB 10442 / H16 / Stanier 337) (Ralstonia eutropha).